The chain runs to 101 residues: Large ribosomal subunit protein uL24 (101 aa).

The protein belongs to the universal ribosomal protein uL24 family. Part of the 50S ribosomal subunit.

One of two assembly initiator proteins, it binds directly to the 5'-end of the 23S rRNA, where it nucleates assembly of the 50S subunit. In terms of biological role, one of the proteins that surrounds the polypeptide exit tunnel on the outside of the subunit. In Ligilactobacillus salivarius (strain UCC118) (Lactobacillus salivarius), this protein is Large ribosomal subunit protein uL24.